The primary structure comprises 811 residues: DEP domain-containing protein 1A (811 aa).

Residues 24 to 108 (FRAGMPLRKH…DNNQLFRFPA (85 aa)) enclose the DEP domain. A Rho-GAP domain is found at 281-321 (DYFLDLPEPLLTFEYYELFVNILVVCGYITVSDRSSGIHKI). A Phosphoserine modification is found at Ser-512. The interaction with ZNF224 stretch occupies residues 598 to 653 (AIDALQLCCLLLPPPNRRKLQLLMRMISRMSQNVDMPKLHDAMGTRSLMIHTFSRC).

As to quaternary structure, isoform 2 and isoform 5 can form homodimers and heterodimers. Interacts with ZNF224. In terms of tissue distribution, expressed in testis. Up-regulated in bladder cancer cells (at protein level).

The protein localises to the nucleus. In terms of biological role, may be involved in transcriptional regulation as a transcriptional corepressor. The DEPDC1A-ZNF224 complex may play a critical role in bladder carcinogenesis by repressing the transcription of the A20 gene, leading to transport of NF-KB protein into the nucleus, resulting in suppression of apoptosis of bladder cancer cells. This chain is DEP domain-containing protein 1A (DEPDC1), found in Homo sapiens (Human).